A 70-amino-acid polypeptide reads, in one-letter code: ATP synthase subunit c (70 aa).

Helical transmembrane passes span 4-24 and 47-67; these read IAAG…DGIV and FIGV…SLLV.

It belongs to the ATPase C chain family. In terms of assembly, F-type ATPases have 2 components, F(1) - the catalytic core - and F(0) - the membrane proton channel. F(1) has five subunits: alpha(3), beta(3), gamma(1), delta(1), epsilon(1). F(0) has three main subunits: a(1), b(2) and c(10-14). The alpha and beta chains form an alternating ring which encloses part of the gamma chain. F(1) is attached to F(0) by a central stalk formed by the gamma and epsilon chains, while a peripheral stalk is formed by the delta and b chains.

The protein resides in the cell membrane. In terms of biological role, f(1)F(0) ATP synthase produces ATP from ADP in the presence of a proton or sodium gradient. F-type ATPases consist of two structural domains, F(1) containing the extramembraneous catalytic core and F(0) containing the membrane proton channel, linked together by a central stalk and a peripheral stalk. During catalysis, ATP synthesis in the catalytic domain of F(1) is coupled via a rotary mechanism of the central stalk subunits to proton translocation. Key component of the F(0) channel; it plays a direct role in translocation across the membrane. A homomeric c-ring of between 10-14 subunits forms the central stalk rotor element with the F(1) delta and epsilon subunits. This chain is ATP synthase subunit c, found in Pediococcus pentosaceus (strain ATCC 25745 / CCUG 21536 / LMG 10740 / 183-1w).